Here is a 2060-residue protein sequence, read N- to C-terminus: Unconventional myosin-X (2060 aa).

Position 1 is an N-acetylmethionine (Met-1). A Myosin motor domain is found at 63–739 (EGVDDMASLT…LEQKLEKRRE (677 aa)). ATP contacts are provided by residues Asn-104, Tyr-113, 160 to 165 (GAGKTE), and Asn-215. Residues 619 to 641 (LHSLMATLSSSNPFFVRCIKPNT) are actin-binding. 3 IQ domains span residues 742 to 771 (IDRA…GVVT), 765 to 794 (VLCG…AAIV), and 788 to 817 (LKKA…EKRE). Residues 814–882 (EKRELEERKR…LTRELEKQRE (69 aa)) are SAH. Residues 883 to 933 (NKQVEEILRLEKEIEDLQRMKEQQELSLTEASLQKLQQLRDEELRRLEDEA) adopt a coiled-coil conformation. Phosphoserine occurs at positions 961, 964, and 967. Disordered regions lie at residues 971–1039 (SELA…PYMN) and 1064–1088 (SLHN…PSPD). Residues 991–1005 (PEEEVDEGFEADDDA) show a composition bias toward acidic residues. Over residues 1064–1083 (SLHNSSSGESTYCMPQNNGD) the composition is skewed to polar residues. Position 1160 is a phosphothreonine (Thr-1160). PH domains are found at residues 1214–1312 (EALK…QVHS) and 1394–1499 (EFIV…NVTD). Positions 1549–1697 (LPYGDINLNL…PSRDEIEALI (149 aa)) constitute a MyTH4 domain. An FERM domain is found at 1702–2046 (MTSTVYCHGG…AYISMIVKKR (345 aa)).

It belongs to the TRAFAC class myosin-kinesin ATPase superfamily. Myosin family. As to quaternary structure, monomer, when in an inactive conformation in the cytosol. Homodimer in its active, membrane-bound conformation; antiparallel coiled coil-mediated dimer formation. Interacts with ECPAS. Interacts with DCC and ITGB5; the presence of DCC inhibits ITGB5 binding. Interacts with tubulin; ITGB5 or DCC binding inhibits tubulin binding. Interacts strongly with CALM3 and weakly with CALM, the CALM3 interaction is essential for function in filopodial extension and motility. Interacts with ITGB1, ITGB3 and ITGB5. Interacts with NEO1. Interacts with VASP.

It localises to the cytoplasm. The protein localises to the cytosol. Its subcellular location is the cell projection. It is found in the lamellipodium. The protein resides in the ruffle. It localises to the cytoskeleton. The protein localises to the filopodium tip. Its subcellular location is the cell cortex. It is found in the filopodium membrane. The protein resides in the cell membrane. Myosins are actin-based motor molecules with ATPase activity. Unconventional myosins serve in intracellular movements. MYO10 binds to actin filaments and actin bundles and functions as a plus end-directed motor. Moves with higher velocity and takes larger steps on actin bundles than on single actin filaments. The tail domain binds to membranous compartments containing phosphatidylinositol 3,4,5-trisphosphate or integrins, and mediates cargo transport along actin filaments. Regulates cell shape, cell spreading and cell adhesion. Stimulates the formation and elongation of filopodia. In hippocampal neurons it induces the formation of dendritic filopodia by trafficking the actin-remodeling protein VASP to the tips of filopodia, where it promotes actin elongation. Plays a role in formation of the podosome belt in osteoclasts. The sequence is that of Unconventional myosin-X (Myo10) from Rattus norvegicus (Rat).